The sequence spans 270 residues: MGIVEEAHNVKILGSGEQTVVLAHGFGTDQSVWKHLVPHLVDDYKVVIFDNMGAGTTNPDYFDFERYSTLEGYAYDVIAILEEFQVGSCIYVGHSVSAMIGVIASIARPDLFTKLVTVSASPRYLNDMDYYGGFEQEDLDQLYEAMRSNYKAWCSGFAPLVIGGDMDSVAIQEFSRTLFNMRPDIALSVLQMIFQSDLRHLLPHVSVPCHIIQSMKDLAVPVVVSEYLHQNLGGGSIVEVMSTEGHLPQLSSPDVVIPVLLRHIHHDIAI.

Ser95 functions as the Nucleophile in the catalytic mechanism. Catalysis depends on residues Asp217 and His246.

Belongs to the AB hydrolase superfamily. Expressed in stigma.

The protein localises to the nucleus. Its subcellular location is the cytoplasm. Its function is as follows. Hydrolase which may be involved in plant olfaction during volatile communication. The polypeptide is Karrikin insensitive 2 receptor CA (Petunia hybrida (Petunia)).